The chain runs to 92 residues: MTKLEDHLEGIINIFHQYSVRLGHYDTLIKRELKQLITKELPNTLKNTKDQGTIDKIFQNLDANQDEQVSFKEFVVLVTDVLITAHDNIHKE.

EF-hand domains are found at residues 13–48 (NIFH…LKNT) and 49–84 (KDQG…VLIT). Histidine 16 lines the Cu cation pocket. Histidine 16 serves as a coordination point for Zn(2+). Ca(2+) contacts are provided by serine 19 and histidine 24. Aspartate 26 is a binding site for Cu cation. Aspartate 26 contributes to the Zn(2+) binding site. Threonine 27 and glutamate 32 together coordinate Ca(2+). The hinge domain stretch occupies residues 38 to 53 (TKELPNTLKNTKDQGT). Residues aspartate 62, asparagine 64, aspartate 66, glutamine 68, and glutamate 73 each contribute to the Ca(2+) site. Residues histidine 86 and histidine 90 each coordinate Cu cation. Zn(2+) contacts are provided by histidine 86 and histidine 90.

This sequence belongs to the S-100 family. As to quaternary structure, homodimer. Homooligomer (tetramer or hexamer) in the presence of calcium, zinc and copper ions. Interacts with AGER and both calcium and zinc are essential for the interaction. Interacts with CACYBP in a calcium-dependent manner. In terms of tissue distribution, found essentially in granulocytes with small amounts found in lymphocytes.

It is found in the secreted. Its subcellular location is the cytoplasm. The protein localises to the cytoskeleton. It localises to the cell membrane. Functionally, S100A12 is a calcium-, zinc- and copper-binding protein which plays a prominent role in the regulation of inflammatory processes and immune response. Its pro-inflammatory activity involves recruitment of leukocytes, promotion of cytokine and chemokine production, and regulation of leukocyte adhesion and migration. Acts as an alarmin or a danger associated molecular pattern (DAMP) molecule and stimulates innate immune cells via binding to receptor for advanced glycation endproducts (AGER). Binding to AGER activates the MAP-kinase and NF-kappa-B signaling pathways leading to production of pro-inflammatory cytokines and up-regulation of cell adhesion molecules ICAM1 and VCAM1. Acts as a monocyte and mast cell chemoattractant. Can stimulate mast cell degranulation and activation which generates chemokines, histamine and cytokines inducing further leukocyte recruitment to the sites of inflammation. Can inhibit the activity of matrix metalloproteinases; MMP2, MMP3 and MMP9 by chelating Zn(2+) from their active sites. The sequence is that of Protein S100-A12 (S100A12) from Sus scrofa (Pig).